The following is a 311-amino-acid chain: N-acetyl-gamma-glutamyl-phosphate reductase (311 aa).

Cys117 is a catalytic residue.

The protein belongs to the NAGSA dehydrogenase family. Type 2 subfamily.

It is found in the cytoplasm. The enzyme catalyses N-acetyl-L-glutamate 5-semialdehyde + phosphate + NADP(+) = N-acetyl-L-glutamyl 5-phosphate + NADPH + H(+). The protein operates within amino-acid biosynthesis; L-arginine biosynthesis; N(2)-acetyl-L-ornithine from L-glutamate: step 3/4. Its function is as follows. Catalyzes the NADPH-dependent reduction of N-acetyl-5-glutamyl phosphate to yield N-acetyl-L-glutamate 5-semialdehyde. The protein is N-acetyl-gamma-glutamyl-phosphate reductase of Brucella anthropi (strain ATCC 49188 / DSM 6882 / CCUG 24695 / JCM 21032 / LMG 3331 / NBRC 15819 / NCTC 12168 / Alc 37) (Ochrobactrum anthropi).